The following is a 395-amino-acid chain: Proteinase-activated receptor 2 (395 aa).

Residues 1–25 (MRSPSAAWLLGGVLLLAASGSCNRT) form the signal peptide. 2 N-linked (GlcNAc...) asparagine glycosylation sites follow: asparagine 23 and asparagine 29. The propeptide at 26–34 (VPGNKSKGR) is removed for receptor activation. Over 35 to 69 (SLIGNVDNSPVVAGRGVTVKPGFSVDEFSTSVLTG) the chain is Extracellular. A helical membrane pass occupies residues 70 to 99 (KLTTVFLPVVYTIVFVVGLPSNGMALWVFL). The Cytoplasmic segment spans residues 100–106 (FRTKKKH). The helical transmembrane segment at 107-135 (PAVIYMANLALADLLSVTWFPLKIAYHIH) threads the bilayer. Topologically, residues 136–147 (GNNWIYGESLCK) are extracellular. A disulfide bridge connects residues cysteine 146 and cysteine 224. Residues 148 to 175 (VLIGFFYGNMYCSILFMTCLSVQRYWVI) form a helical membrane-spanning segment. The Cytoplasmic portion of the chain corresponds to 176–181 (VNPMVH). The helical transmembrane segment at 182 to 209 (PKKQANIAIGVSLGIWLLILLLTIPLYV) threads the bilayer. Over 210 to 233 (VKQTSYIRALNITTCHDVLPEEVL) the chain is Extracellular. N-linked (GlcNAc...) asparagine glycosylation is present at asparagine 220. Residues 234-267 (VGDMFNYFLSLAIGVFLFPAFLTASAYVLMIRTL) form a helical membrane-spanning segment. Residues 268-275 (QSSAMDES) lie on the Cytoplasmic side of the membrane. Residues 276–315 (SGKKRRRAIKLIVTVLAMYLICFTPSNLLLVVHYFLIKTR) traverse the membrane as a helical segment. The Extracellular portion of the chain corresponds to 316-321 (GQSHVY). A helical transmembrane segment spans residues 322-345 (ALYIVALCLSTLNSCIDPFVYYFI). At 346 to 395 (SQDFRDHAKNALLCRSVRTVKRMQVSLSSKKFSGKSSSYSSSSTSVKGSY) the chain is on the cytoplasmic side. Residue cysteine 359 is the site of S-palmitoyl cysteine attachment.

It belongs to the G-protein coupled receptor 1 family. In terms of assembly, interacts with TLR4, COPS5 and TMED2. Interacts with GNAQ, GNA11, GNA12, GNA13 and GNA14. In terms of processing, a proteolytic cleavage generates a new N-terminus that functions as a tethered ligand. Activating serine proteases include trypsin, mast cell tryptase, coagulation factors VII and Xa, myeloblastin/PRTN3 and membrane-type serine protease 1/ST14. Proposed subsequent cleavage by serine proteases is leading to receptor deactivation and include neutrophil elastase and cathepsin G. At least in part, implicated proteases are also shown to activate the receptor; the glycosylation status of the receptor is thought to contribute to the difference. Post-translationally, N-glycosylated and sialylated. Multiple phosphorylated on serine and threonine residues in the cytoplasmic region upon receptor activation; required for receptor desensitization and recruitment of beta-arrestin. In terms of processing, monoubiquitinated by CBL at the plasma membrane and in early endosomes; not required for receptor endocytosis but for translocation to late endosomes or lysosomes. Deubiquitination involves STAMBP and USP8; required for lysosomal trafficking and receptor degradation.

It is found in the cell membrane. In terms of biological role, receptor for trypsin and trypsin-like enzymes coupled to G proteins. Its function is mediated through the activation of several signaling pathways including phospholipase C (PLC), intracellular calcium, mitogen-activated protein kinase (MAPK), I-kappaB kinase/NF-kappaB and Rho. Can also be transactivated by cleaved F2R/PAR1. Involved in modulation of inflammatory responses and regulation of innate and adaptive immunity, and acts as a sensor for proteolytic enzymes generated during infection. Generally is promoting inflammation. Can signal synergistically with TLR4 and probably TLR2 in inflammatory responses and modulates TLR3 signaling. Has a protective role in establishing the endothelial barrier; the activity involves coagulation factor X. Regulates endothelial cell barrier integrity during neutrophil extravasation, probably following proteolytic cleavage by PRTN3. Proposed to have a bronchoprotective role in airway epithelium, but also shown to compromise the airway epithelial barrier by interrupting E-cadherin adhesion. Involved in the regulation of vascular tone; activation results in hypotension presumably mediated by vasodilation. Associates with a subset of G proteins alpha subunits such as GNAQ, GNA11, GNA14, GNA12 and GNA13, but probably not with G(o) alpha, G(i) subunit alpha-1 and G(i) subunit alpha-2. Believed to be a class B receptor which internalizes as a complex with arrestin and traffic with it to endosomal vesicles, presumably as desensitized receptor, for extended periods of time. Mediates inhibition of TNF-alpha stimulated JNK phosphorylation via coupling to GNAQ and GNA11; the function involves dissociation of RIPK1 and TRADD from TNFR1. Mediates phosphorylation of nuclear factor NF-kappa-B RELA subunit at 'Ser-536'; the function involves IKBKB and is predominantly independent of G proteins. Involved in cellular migration. Involved in cytoskeletal rearrangement and chemotaxis through beta-arrestin-promoted scaffolds; the function is independent of GNAQ and GNA11 and involves promotion of cofilin dephosphorylation and actin filament severing. Induces redistribution of COPS5 from the plasma membrane to the cytosol and activation of the JNK cascade is mediated by COPS5. Involved in the recruitment of leukocytes to the sites of inflammation and is the major PAR receptor capable of modulating eosinophil function such as pro-inflammatory cytokine secretion, superoxide production and degranulation. During inflammation promotes dendritic cell maturation, trafficking to the lymph nodes and subsequent T-cell activation. Involved in antimicrobial response of innate immune cells; activation enhances phagocytosis of Gram-positive and killing of Gram-negative bacteria. Acts synergistically with interferon-gamma in enhancing antiviral responses. Probably mediates activation of pro-inflammatory and pro-fibrotic responses in fibroblasts, triggered by coagulation factor Xa (F10). Probably mediates activation of barrier protective signaling responses in endothelial cells, triggered by coagulation factor Xa (F10). In Bos taurus (Bovine), this protein is Proteinase-activated receptor 2 (F2RL1).